A 538-amino-acid polypeptide reads, in one-letter code: L-aspartate oxidase (538 aa).

Residues 14 to 17 (SGAA), lysine 36, 43 to 50 (STYWAQGG), and aspartate 223 each bind FAD. Residue arginine 290 is the Proton donor/acceptor of the active site. FAD contacts are provided by residues glutamate 375 and 391 to 392 (SL).

It belongs to the FAD-dependent oxidoreductase 2 family. NadB subfamily. FAD serves as cofactor.

The protein localises to the cytoplasm. The catalysed reaction is L-aspartate + O2 = iminosuccinate + H2O2. The protein operates within cofactor biosynthesis; NAD(+) biosynthesis; iminoaspartate from L-aspartate (oxidase route): step 1/1. Its function is as follows. Catalyzes the oxidation of L-aspartate to iminoaspartate, the first step in the de novo biosynthesis of NAD(+). The chain is L-aspartate oxidase (nadB) from Pseudomonas aeruginosa (strain ATCC 15692 / DSM 22644 / CIP 104116 / JCM 14847 / LMG 12228 / 1C / PRS 101 / PAO1).